Consider the following 450-residue polypeptide: MENSLSLDLTKTKPYVEEHEIQYLESIIREMDNTLGKKTGPGNKFLGWMDLPINYNKEEFARIKKAAEKIKNTCDVFIVIGIGGSYLGSRAAIEMISNTFYNNLEKNQRRVPQIYFAGNNISSTYMADLLELVKDKDICVNVISKSGTTTEPAIAFRIFKELLEKKYGKEGAKERIFATTDVAKGALRTLADLEGYETFVIPDDVGGRFSVLTPVGLLPIAVSGIDVDEMMKGAADARQEYSSDNIEKNHVYRYVAVRNALYRKGKTTEMLVNFEPCLHYFGEWWKQLYGESEGKDGKGIFPAAADFSTDLHSMGQYIQEGLRNIFETFINVENPRKSIIIKEDKENLDGLNFLAEKDMDYVNHQALRGTVLAHNDGGVPAIVLNVPELSAYYFGQLVYFFEKACGISGYLQGVNPFDQPGVEAYKKNMFALLGKPGYEDMKATLEERLK.

E291 (proton donor) is an active-site residue. Residues H312 and K426 contribute to the active site.

This sequence belongs to the GPI family.

It is found in the cytoplasm. It catalyses the reaction alpha-D-glucose 6-phosphate = beta-D-fructose 6-phosphate. It functions in the pathway carbohydrate biosynthesis; gluconeogenesis. Its pathway is carbohydrate degradation; glycolysis; D-glyceraldehyde 3-phosphate and glycerone phosphate from D-glucose: step 2/4. Catalyzes the reversible isomerization of glucose-6-phosphate to fructose-6-phosphate. This chain is Glucose-6-phosphate isomerase, found in Clostridium botulinum (strain Langeland / NCTC 10281 / Type F).